The primary structure comprises 261 residues: Cytochrome c oxidase subunit 3 (261 aa).

At 1 to 15 (MAHQAHAYHMVDPSP) the chain is on the mitochondrial matrix side. A helical membrane pass occupies residues 16–34 (WPLTGAIAALLLTSGTAVW). At 35–40 (FHFHSL) the chain is on the mitochondrial intermembrane side. The chain crosses the membrane as a helical span at residues 41-66 (TLLTMGNILLLLTMYQWWRDIIREGT). Residues 67 to 72 (FQGHHT) are Mitochondrial matrix-facing. A helical membrane pass occupies residues 73–105 (PPVQKGLRYGMILFITSEVFFFLGFFWAFYHSS). Residues 106-128 (LSPTPELGGCWPPTGIITLDPFE) lie on the Mitochondrial intermembrane side of the membrane. A helical transmembrane segment spans residues 129-152 (VPLLNTAVLLASGVTVTWAHHSIM). Topologically, residues 153-155 (EGE) are mitochondrial matrix. The chain crosses the membrane as a helical span at residues 156–183 (RKQTIQALTLTILLGFYFTFLQGMEYYE). Residues 184–190 (APFTIAD) are Mitochondrial intermembrane-facing. A helical membrane pass occupies residues 191 to 223 (GVYGSTFFVATGFHGLHVIIGSTFLAICLLRQI). The Mitochondrial matrix portion of the chain corresponds to 224–232 (QYHFTSEHH). A helical transmembrane segment spans residues 233-256 (FGFEAAAWYWHFVDVVWLFLYVSI). Over 257–261 (YWWGS) the chain is Mitochondrial intermembrane.

The protein belongs to the cytochrome c oxidase subunit 3 family. Component of the cytochrome c oxidase (complex IV, CIV), a multisubunit enzyme composed of 14 subunits. The complex is composed of a catalytic core of 3 subunits MT-CO1, MT-CO2 and MT-CO3, encoded in the mitochondrial DNA, and 11 supernumerary subunits COX4I, COX5A, COX5B, COX6A, COX6B, COX6C, COX7A, COX7B, COX7C, COX8 and NDUFA4, which are encoded in the nuclear genome. The complex exists as a monomer or a dimer and forms supercomplexes (SCs) in the inner mitochondrial membrane with NADH-ubiquinone oxidoreductase (complex I, CI) and ubiquinol-cytochrome c oxidoreductase (cytochrome b-c1 complex, complex III, CIII), resulting in different assemblies (supercomplex SCI(1)III(2)IV(1) and megacomplex MCI(2)III(2)IV(2)).

It is found in the mitochondrion inner membrane. It carries out the reaction 4 Fe(II)-[cytochrome c] + O2 + 8 H(+)(in) = 4 Fe(III)-[cytochrome c] + 2 H2O + 4 H(+)(out). Functionally, component of the cytochrome c oxidase, the last enzyme in the mitochondrial electron transport chain which drives oxidative phosphorylation. The respiratory chain contains 3 multisubunit complexes succinate dehydrogenase (complex II, CII), ubiquinol-cytochrome c oxidoreductase (cytochrome b-c1 complex, complex III, CIII) and cytochrome c oxidase (complex IV, CIV), that cooperate to transfer electrons derived from NADH and succinate to molecular oxygen, creating an electrochemical gradient over the inner membrane that drives transmembrane transport and the ATP synthase. Cytochrome c oxidase is the component of the respiratory chain that catalyzes the reduction of oxygen to water. Electrons originating from reduced cytochrome c in the intermembrane space (IMS) are transferred via the dinuclear copper A center (CU(A)) of subunit 2 and heme A of subunit 1 to the active site in subunit 1, a binuclear center (BNC) formed by heme A3 and copper B (CU(B)). The BNC reduces molecular oxygen to 2 water molecules using 4 electrons from cytochrome c in the IMS and 4 protons from the mitochondrial matrix. The polypeptide is Cytochrome c oxidase subunit 3 (mt-co3) (Salmo salar (Atlantic salmon)).